Consider the following 529-residue polypeptide: UPF0159 protein TC_0921 (529 aa).

ThyX domains are found at residues 38–274 and 309–511; these read KGAL…AEPH and KGVK…LKFV.

The protein belongs to the UPF0159 family.

The sequence is that of UPF0159 protein TC_0921 from Chlamydia muridarum (strain MoPn / Nigg).